Here is a 311-residue protein sequence, read N- to C-terminus: GTPase Era (311 aa).

In terms of domain architecture, Era-type G spans 18–185 (RSGFVALIGA…AKYLAESVPN (168 aa)). Residues 26-33 (GAPNAGKS) form a G1 region. 26–33 (GAPNAGKS) contacts GTP. Residues 52-56 (QTTRA) form a G2 region. A G3 region spans residues 73-76 (DTPG). GTP is bound by residues 73–77 (DTPGI) and 135–138 (NKVD). The segment at 135-138 (NKVD) is G4. The segment at 164-166 (ISA) is G5. The KH type-2 domain maps to 216-293 (LHEELPYAST…HQFLFVKVRE (78 aa)).

Belongs to the TRAFAC class TrmE-Era-EngA-EngB-Septin-like GTPase superfamily. Era GTPase family. Monomer.

Its subcellular location is the cytoplasm. The protein localises to the cell inner membrane. Its function is as follows. An essential GTPase that binds both GDP and GTP, with rapid nucleotide exchange. Plays a role in 16S rRNA processing and 30S ribosomal subunit biogenesis and possibly also in cell cycle regulation and energy metabolism. This is GTPase Era from Brucella melitensis biotype 1 (strain ATCC 23456 / CCUG 17765 / NCTC 10094 / 16M).